Consider the following 508-residue polypeptide: UBX domain-containing protein 4 (508 aa).

The interval M1–E200 is interaction with UBQLN1. Residues M1–T413 lie on the Cytoplasmic side of the membrane. The tract at residues G117 to V199 is disordered. The span at A122–R190 shows a compositional bias: polar residues. The UBX domain occupies E315 to L393. An intramembrane segment occupies L414–F434. Residues S435–M508 are Cytoplasmic-facing. Over residues E450–N459 the composition is skewed to polar residues. A disordered region spans residues E450–M508. Residues S460 to D491 are compositionally biased toward basic and acidic residues. T489 carries the post-translational modification Phosphothreonine. The segment covering N498–M508 has biased composition (polar residues).

In terms of assembly, directly interacts with VCP. Interacts with UBQLN1. Forms a complex with VCP and UBQLN1.

It is found in the endoplasmic reticulum membrane. The protein resides in the nucleus envelope. Its function is as follows. Involved in endoplasmic reticulum-associated protein degradation (ERAD). Acts as a platform to recruit both UBQLN1 and VCP to the ER during ERAD. The sequence is that of UBX domain-containing protein 4 (UBXN4) from Bos taurus (Bovine).